The primary structure comprises 270 residues: Undecaprenyl-diphosphatase (270 aa).

8 consecutive transmembrane segments (helical) span residues 1 to 21 (MDLFNAAILALIQGITEFLPI), 39 to 59 (QGLVFDIAANSGSLAAVMLYF), 87 to 107 (SHLVLQLALATIPVGLVGLAC), 114 to 134 (VARDPMIIATTSILFGLLLWW), 147 to 167 (ALSWRQVGIIGIAQAFALIPG), 193 to 213 (FLMAIPVGILAALLDLKDLFA), 223 to 243 (FLGVGFCVSGLSAYMVIHGLL), and 250 to 270 (TMTPFVVYRVVLGVVIFATLG).

This sequence belongs to the UppP family.

The protein resides in the cell inner membrane. The catalysed reaction is di-trans,octa-cis-undecaprenyl diphosphate + H2O = di-trans,octa-cis-undecaprenyl phosphate + phosphate + H(+). Its function is as follows. Catalyzes the dephosphorylation of undecaprenyl diphosphate (UPP). Confers resistance to bacitracin. This chain is Undecaprenyl-diphosphatase, found in Magnetococcus marinus (strain ATCC BAA-1437 / JCM 17883 / MC-1).